A 476-amino-acid polypeptide reads, in one-letter code: Homeobox protein invected (476 aa).

Disordered regions lie at residues 1–43 (MAAV…SEDI), 273–331 (KTRY…TSGD), and 347–381 (DRPS…AFSG). Polar residues predominate over residues 23-32 (SPNTRDTTSP). 2 stretches are compositionally biased toward basic and acidic residues: residues 33 to 43 (ECHDDEKSEDI) and 292 to 305 (KLDE…KTPD). The segment covering 318 to 331 (GSNSGSTSGATSGD) has biased composition (low complexity). The segment at residues 372–431 (EKRPRTAFSGPQLARLKHEFAENRYLTERRRQSLAAELGLAEAQIKIWFQNKRAKIKKAS) is a DNA-binding region (homeobox).

This sequence belongs to the engrailed homeobox family. In terms of tissue distribution, expressed in the middle silk gland but not in the posterior silk gland during the fourth molt/fifth intermolt period.

It is found in the nucleus. In terms of biological role, this protein might be involved in the compartmentalization of the silk gland. The chain is Homeobox protein invected (INV) from Bombyx mori (Silk moth).